The following is a 553-amino-acid chain: Non-SCF-type F-box protein ROY1 (553 aa).

One can recognise an F-box domain in the interval F3 to I49.

In terms of assembly, interacts with SKP1 and YPT32; SKP1 is required for the interaction with YPT32.

It is found in the cytoplasm. Its subcellular location is the nucleus. It localises to the cytoplasmic vesicle membrane. Its function is as follows. Non-SCF-type F-box protein involved in the endocytic with the vacuolar sorting pathway. Acts as a repressor of YPT52 by inhibiting the formation of active, GTP-bound, YPT52. Involved in the defense mechanism against methylmercury toxicity. The sequence is that of Non-SCF-type F-box protein ROY1 (ROY1) from Saccharomyces cerevisiae (strain ATCC 204508 / S288c) (Baker's yeast).